A 371-amino-acid polypeptide reads, in one-letter code: N-acetyllactosaminide alpha-2,3-sialyltransferase (371 aa).

Position 255 (Gly-255) interacts with CMP-N-acetyl-beta-neuraminate. The active-site Proton acceptor is Asp-258. Residues 278 to 282, 299 to 300, and 322 to 323 contribute to the CMP-N-acetyl-beta-neuraminate site; these read APHPR, IE, and SG. Residue His-280 is the Proton donor of the active site.

Belongs to the glycosyltransferase 52 family. In terms of assembly, homodimer.

The protein resides in the cell outer membrane. The catalysed reaction is a beta-D-galactosyl-(1-&gt;4)-N-acetyl-beta-D-glucosaminyl derivative + CMP-N-acetyl-beta-neuraminate = an N-acetyl-alpha-neuraminyl-(2-&gt;3)-beta-D-galactosyl-(1-&gt;4)-N-acetyl-beta-D-glucosaminyl derivative + CMP + H(+). It functions in the pathway bacterial outer membrane biogenesis; lipooligosaccharide biosynthesis. Functionally, catalyzes the transfer of sialic acid from the substrate CMP-N-acetylneuraminate to the terminal galactose residue of the lacto-N-neotetraose branch of surface lipooligosaccharide (LOS), forming an alpha-2,3-sialyl linkage. Thus, functions in the sialylation of LOS, which plays a role in the evasion of the host immune response by protecting N.meningitidis from complement-mediated serum killing and from phagocytic killing by neutrophils. The sequence is that of N-acetyllactosaminide alpha-2,3-sialyltransferase from Neisseria meningitidis serogroup A / serotype 4A (strain DSM 15465 / Z2491).